The following is a 130-amino-acid chain: Small ribosomal subunit protein uS9 (130 aa).

This sequence belongs to the universal ribosomal protein uS9 family.

The chain is Small ribosomal subunit protein uS9 from Aliivibrio fischeri (strain MJ11) (Vibrio fischeri).